Reading from the N-terminus, the 194-residue chain is Prostaglandin-H2 D-isomerase (194 aa).

The N-terminal stretch at 1 to 24 is a signal peptide; sequence MAASHTLWMGLVLLGVLGVLQTRA. Pyrrolidone carboxylic acid is present on Q25. Residue N51 is glycosylated (N-linked (GlcNAc...) asparagine). C65 serves as the catalytic Nucleophile. Residue N78 is glycosylated (N-linked (GlcNAc...) asparagine). C89 and C189 are disulfide-bonded.

Belongs to the calycin superfamily. Lipocalin family. As to quaternary structure, monomer. In the male reproductive system, it is expressed in the testis and epididymis, and is secreted into the seminal fluid.

It is found in the rough endoplasmic reticulum. It localises to the nucleus membrane. Its subcellular location is the golgi apparatus. The protein localises to the cytoplasm. The protein resides in the perinuclear region. It is found in the secreted. The catalysed reaction is prostaglandin H2 = prostaglandin D2. In terms of biological role, catalyzes the conversion of PGH2 to PGD2, a prostaglandin involved in smooth muscle contraction/relaxation and a potent inhibitor of platelet aggregation. Involved in a variety of CNS functions, such as sedation, NREM sleep and PGE2-induced allodynia, and may have an anti-apoptotic role in oligodendrocytes. Binds small non-substrate lipophilic molecules, including biliverdin, bilirubin, retinal, retinoic acid and thyroid hormone, and may act as a scavenger for harmful hydrophobic molecules and as a secretory retinoid and thyroid hormone transporter. Possibly involved in development and maintenance of the blood-brain, blood-retina, blood-aqueous humor and blood-testis barrier. It is likely to play important roles in both maturation and maintenance of the central nervous system and male reproductive system. Involved in PLA2G3-dependent maturation of mast cells. PLA2G3 is secreted by immature mast cells and acts on nearby fibroblasts upstream to PTDGS to synthesize PGD2, which in turn promotes mast cell maturation and degranulation via PTGDR. This chain is Prostaglandin-H2 D-isomerase (PTGDS), found in Equus caballus (Horse).